We begin with the raw amino-acid sequence, 177 residues long: Eggshell protein (177 aa).

An N-terminal signal peptide occupies residues 1–18 (MKQSLTLVFLVAIGYATA). Tandem repeats lie at residues 25 to 41 (YSGGYGGGCYGSDCDSG), 42 to 59 (YGDSGYGGGCTGGDCGGG), 60 to 75 (YGGGYGGGCSGGDCGN), 76 to 91 (YGGGYGGDCNGGDCGN), and 92 to 112 (YGGGYGGGNGGGCSGGNCGGG). Positions 25–112 (YSGGYGGGCY…GCSGGNCGGG (88 aa)) are 5 X approximate tandem repeats. The segment covering 149–166 (GSGKGKGGGKGGKGGKGG) has biased composition (gly residues). The segment at 149 to 177 (GSGKGKGGGKGGKGGKGGTYKPSHYGGGY) is disordered.

This is Eggshell protein from Schistosoma mansoni (Blood fluke).